A 389-amino-acid chain; its full sequence is Type 2 DNA topoisomerase 6 subunit A (389 aa).

The region spanning 12-162 (EARRKAANIL…MLILSKEKGK (151 aa)) is the Topo IIA-type catalytic domain. Tyr-106 acts as the O-(5'-phospho-DNA)-tyrosine intermediate in catalysis. Mg(2+) contacts are provided by Glu-209 and Asp-261.

The protein belongs to the TOP6A family. In terms of assembly, homodimer. Heterotetramer of two Top6A and two Top6B chains. The cofactor is Mg(2+).

The enzyme catalyses ATP-dependent breakage, passage and rejoining of double-stranded DNA.. Not inhibited by the DNA gyrase inhibitor novobiocin, instead inhibited by eukaryotic topoisomerase inhibitors such as m- and o-amsacrine, ellipticine, and the quinolone CP-115,953. Functionally, relaxes both positive and negative supercoils and exhibits a strong decatenase and unknotting activity; it cannot introduce DNA supercoils. ATP is absolutely required for DNA cleavage; the nonhydrolyzable analog AMP-PNP generates nicked or linear products from a supercoiled dsDNA substrate. Generates staggered two-nucleotide long 5' overhangs. The enzyme is covalently attached transiently to the 5'-ends of the cleaved strands. This Saccharolobus shibatae (strain ATCC 51178 / DSM 5389 / JCM 8931 / NBRC 15437 / B12) (Sulfolobus shibatae) protein is Type 2 DNA topoisomerase 6 subunit A.